A 372-amino-acid polypeptide reads, in one-letter code: MQSVIAQAKRIVVKVGSSLVTNDGKGLDHDAIARWAAQIARLRVAGKEVVLVSSGAIAEGMQRLGWARRPKEIHELQAAAAVGQMGLAQVYESQFTRYGIRTAQVLLTHADLADRERYLNARSTLLTLLSLGVVPIINENDTVVTDEIKFGDNDTLGALVTNLIEGDALVILTDQRGLYTADPRKDPAAQFVDEALAGTPELEAMAGGAGTSIGRGGMLTKILAAKRAAKSGAHTTIASGREANVLERLAAGEAIGTQLLAPTGRLTARKQWMADHLQLRGRVVIDGGAVEKLTSGGKSLLPIGVVEVQGEFARGEVIACVDAQGKEVARGITNYSSAESRLIARKPSSEIESVLGHLNEPELIHRDNLVLV.

Lys-14 lines the ATP pocket. Residues Ser-54, Asp-141, and Asn-153 each contribute to the substrate site. An ATP-binding site is contributed by 173–174; that stretch reads TD. Positions 280 to 358 constitute a PUA domain; sequence RGRVVIDGGA…SEIESVLGHL (79 aa).

Belongs to the glutamate 5-kinase family.

It localises to the cytoplasm. It catalyses the reaction L-glutamate + ATP = L-glutamyl 5-phosphate + ADP. It participates in amino-acid biosynthesis; L-proline biosynthesis; L-glutamate 5-semialdehyde from L-glutamate: step 1/2. Catalyzes the transfer of a phosphate group to glutamate to form L-glutamate 5-phosphate. This Cupriavidus taiwanensis (strain DSM 17343 / BCRC 17206 / CCUG 44338 / CIP 107171 / LMG 19424 / R1) (Ralstonia taiwanensis (strain LMG 19424)) protein is Glutamate 5-kinase.